The primary structure comprises 289 residues: BTB/POZ domain-containing protein KCTD7 (289 aa).

The segment at Met-1–Leu-42 is disordered. Residues Val-53–Leu-141 form the BTB domain.

In terms of assembly, interacts with CUL3.

Its subcellular location is the cell membrane. It localises to the cytoplasm. It is found in the cytosol. Functionally, may be involved in the control of excitability of cortical neurons. The polypeptide is BTB/POZ domain-containing protein KCTD7 (Kctd7) (Rattus norvegicus (Rat)).